Consider the following 234-residue polypeptide: MKITWLGHSAFRIEIGKATILLDPFLSHNASFSGQDIKHVSAGVTHILLTHGHGDHVGDTVALAKETGAVVLANADLAAWLGSKGLDRLEMGNTGGTIALGSFSATFTNALHSSAQITEDGVSHALGNANGLMLHFEDEASILAMGDTDIFADMALINELHQPDIGLVPIGDRFTMGGAVAALACRRYFNFKTAIPCHFGTFPIIEQTADKFVAGMEGSKTDVKALKAAESLSI.

The protein belongs to the UPF0173 family.

The chain is UPF0173 metal-dependent hydrolase Rleg2_1519 from Rhizobium leguminosarum bv. trifolii (strain WSM2304).